Consider the following 157-residue polypeptide: Endoribonuclease YbeY (157 aa).

Zn(2+) is bound by residues histidine 116, histidine 120, and histidine 126.

The protein belongs to the endoribonuclease YbeY family. It depends on Zn(2+) as a cofactor.

The protein localises to the cytoplasm. In terms of biological role, single strand-specific metallo-endoribonuclease involved in late-stage 70S ribosome quality control and in maturation of the 3' terminus of the 16S rRNA. The polypeptide is Endoribonuclease YbeY (Blochmanniella pennsylvanica (strain BPEN)).